The chain runs to 235 residues: 7-cyano-7-deazaguanine synthase (235 aa).

13-23 (FSGGLDSTTCL) contacts ATP. Cys197, Cys207, Cys210, and Cys213 together coordinate Zn(2+).

This sequence belongs to the QueC family. Requires Zn(2+) as cofactor.

The catalysed reaction is 7-carboxy-7-deazaguanine + NH4(+) + ATP = 7-cyano-7-deazaguanine + ADP + phosphate + H2O + H(+). It participates in purine metabolism; 7-cyano-7-deazaguanine biosynthesis. Its function is as follows. Catalyzes the ATP-dependent conversion of 7-carboxy-7-deazaguanine (CDG) to 7-cyano-7-deazaguanine (preQ(0)). This is 7-cyano-7-deazaguanine synthase from Solidesulfovibrio magneticus (strain ATCC 700980 / DSM 13731 / RS-1) (Desulfovibrio magneticus).